Consider the following 922-residue polypeptide: Isoleucine--tRNA ligase (922 aa).

The 'HIGH' region signature appears at 57-67 (PYANGDIHMGH). L-isoleucyl-5'-AMP is bound at residue Glu553. Positions 594–598 (KMSKS) match the 'KMSKS' region motif. Lys597 lines the ATP pocket. Residues Cys889, Cys892, Cys909, and Cys912 each coordinate Zn(2+).

The protein belongs to the class-I aminoacyl-tRNA synthetase family. IleS type 1 subfamily. As to quaternary structure, monomer. Requires Zn(2+) as cofactor.

The protein resides in the cytoplasm. It carries out the reaction tRNA(Ile) + L-isoleucine + ATP = L-isoleucyl-tRNA(Ile) + AMP + diphosphate. Catalyzes the attachment of isoleucine to tRNA(Ile). As IleRS can inadvertently accommodate and process structurally similar amino acids such as valine, to avoid such errors it has two additional distinct tRNA(Ile)-dependent editing activities. One activity is designated as 'pretransfer' editing and involves the hydrolysis of activated Val-AMP. The other activity is designated 'posttransfer' editing and involves deacylation of mischarged Val-tRNA(Ile). The sequence is that of Isoleucine--tRNA ligase from Bacillus licheniformis (strain ATCC 14580 / DSM 13 / JCM 2505 / CCUG 7422 / NBRC 12200 / NCIMB 9375 / NCTC 10341 / NRRL NRS-1264 / Gibson 46).